The sequence spans 1090 residues: Vinculin (1090 aa).

2 tandem repeats follow at residues 339-446 and 455-561. The interval 339–561 is 2 X repeats; it reads DADNVTVMRK…LKNALRDLGD (223 aa). 2 disordered regions span residues 811-842 and 864-895; these read GVPM…SQVI and DIPA…EEET. Polar residues predominate over residues 817–830; the sequence is GRHSSYQESISRAS. The span at 866 to 887 shows a compositional bias: pro residues; it reads PAPPRPPPPVELSPPPRPPPPP.

The protein belongs to the vinculin/alpha-catenin family. As to quaternary structure, may interact with sorb-1. As to expression, expressed in gonadal sheath cells and the spermatheca. Expressed in body wall muscles.

It localises to the cytoplasm. The protein resides in the cytoskeleton. The protein localises to the cell junction. Its subcellular location is the adherens junction. It is found in the cell membrane. It localises to the focal adhesion. In terms of biological role, involved in cell adhesion. May be involved in the attachment of the actin-based microfilaments to the plasma membrane. Involved in ovulation. The polypeptide is Vinculin (Caenorhabditis elegans).